We begin with the raw amino-acid sequence, 268 residues long: Tryptophan synthase alpha chain (268 aa).

Residues glutamate 49 and aspartate 60 each act as proton acceptor in the active site.

This sequence belongs to the TrpA family. As to quaternary structure, tetramer of two alpha and two beta chains.

It catalyses the reaction (1S,2R)-1-C-(indol-3-yl)glycerol 3-phosphate + L-serine = D-glyceraldehyde 3-phosphate + L-tryptophan + H2O. Its pathway is amino-acid biosynthesis; L-tryptophan biosynthesis; L-tryptophan from chorismate: step 5/5. Functionally, the alpha subunit is responsible for the aldol cleavage of indoleglycerol phosphate to indole and glyceraldehyde 3-phosphate. In Photorhabdus laumondii subsp. laumondii (strain DSM 15139 / CIP 105565 / TT01) (Photorhabdus luminescens subsp. laumondii), this protein is Tryptophan synthase alpha chain.